Reading from the N-terminus, the 172-residue chain is AIG2-like protein C (172 aa).

13–18 serves as a coordination point for substrate; the sequence is YGSLQE. Catalysis depends on Glu-81, which acts as the Proton acceptor.

This sequence belongs to the gamma-glutamylcyclotransferase family. Expressed in flowers, leaves, stems and roots.

Functionally, putative gamma-glutamylcyclotransferase. The sequence is that of AIG2-like protein C from Arabidopsis thaliana (Mouse-ear cress).